Consider the following 209-residue polypeptide: Dehydration-responsive element-binding protein 1F (209 aa).

A Nuclear localization signal motif is present at residues 14-26 (KKRAGRRVFKETR). A DNA-binding region (AP2/ERF) is located at residues 29–86 (VYRGIRRRNGDKWVCEVREPTHQRRIWLGTYPTADMAARAHDVAVLALRGRSACLNFA). Positions 137-157 (FGSGSGSGSGSEERNSSSYGF) are disordered.

Belongs to the AP2/ERF transcription factor family. ERF subfamily.

It is found in the nucleus. Transcriptional activator that binds specifically to the DNA sequence 5'-[AG]CCGAC-3'. Binding to the C-repeat/DRE element mediates cold or dehydration-inducible transcription. CBF/DREB1 factors play a key role in freezing tolerance and cold acclimation. The polypeptide is Dehydration-responsive element-binding protein 1F (DREB1F) (Arabidopsis thaliana (Mouse-ear cress)).